A 341-amino-acid chain; its full sequence is Paired box protein Pax-9 (341 aa).

Positions 4–130 (AFGEVNQLGG…SSISRILRNK (127 aa)) form a DNA-binding region, paired. Residues 7–63 (EVNQLGGVFVNGRPLPNAIRLRIVELAQLGIRPCDISRQLRVSHGCVSKILARYNET) form a PAI subdomain region. The RED subdomain stretch occupies residues 82–130 (TVVKHIRTYKQRDPGIFAWEIRDRLLADGVCDKYNVPSVSSISRILRNK). Positions 168–189 (AAAAKVPTPPGVPAIPGSVAMP) are interaction with KDM5B.

Interacts with KDM5B.

The protein resides in the nucleus. Functionally, transcription factor required for normal development of thymus, parathyroid glands, ultimobranchial bodies, teeth, skeletal elements of skull and larynx as well as distal limbs. The sequence is that of Paired box protein Pax-9 (PAX9) from Perodicticus potto edwarsi (Potto).